The following is a 141-amino-acid chain: Hemoglobin subunit alpha-D (141 aa).

One can recognise a Globin domain in the interval 1-141 (MLGAEETALV…VAAVLAEKYR (141 aa)). Positions 58 and 87 each coordinate heme b.

It belongs to the globin family. In terms of assembly, heterotetramer of two alpha-D chains and two beta chains. Red blood cells.

Involved in oxygen transport from the lung to the various peripheral tissues. The protein is Hemoglobin subunit alpha-D (HBAD) of Phalacrocorax carbo (Great cormorant).